The sequence spans 999 residues: Bifunctional glutamine synthetase adenylyltransferase/adenylyl-removing enzyme (999 aa).

The tract at residues 1–483 (MTPGRRSSTF…LHEKLFYRPL (483 aa)) is adenylyl removase. Residues 489-999 (QLAPGEARLS…RTVVEDLFYA (511 aa)) form an adenylyl transferase region.

This sequence belongs to the GlnE family. Mg(2+) is required as a cofactor.

The enzyme catalyses [glutamine synthetase]-O(4)-(5'-adenylyl)-L-tyrosine + phosphate = [glutamine synthetase]-L-tyrosine + ADP. It carries out the reaction [glutamine synthetase]-L-tyrosine + ATP = [glutamine synthetase]-O(4)-(5'-adenylyl)-L-tyrosine + diphosphate. Functionally, adenylation and deadenylation of glutamate--ammonia ligase. Its function is as follows. Involved in the regulation of glutamine synthetase GlnA, a key enzyme in the process to assimilate ammonia. When cellular nitrogen levels are high, the C-terminal adenylyl transferase (AT) inactivates GlnA by covalent transfer of an adenylyl group from ATP to specific tyrosine residue of GlnA, thus reducing its activity. Conversely, when nitrogen levels are low, the N-terminal adenylyl removase (AR) activates GlnA by removing the adenylyl group by phosphorolysis, increasing its activity. The regulatory region of GlnE binds the signal transduction protein PII (GlnB) which indicates the nitrogen status of the cell. This chain is Bifunctional glutamine synthetase adenylyltransferase/adenylyl-removing enzyme, found in Streptomyces coelicolor (strain ATCC BAA-471 / A3(2) / M145).